We begin with the raw amino-acid sequence, 745 residues long: MFRAAAAGPYDEAINKATDENLTSEDWGAIMEVCDRVATDANGAKEAVNSMIKRLAHRNANVQLYTLEVANALSQNCGKNMHRELSSRAFTDALLKLANDRNTHTQVKAKILERMKEWSDMFKSDSDLGIMYDAYYRLKQSNPTLQPPSAPQKNVLTDADRQKEEEELQMALQLSLQEEERKKRPAGASGATASSSSGGAAAGPSNAGGAVASGEGTNSTAGQAEATPQPVPSSTTAATVSRVRALYDFVPSEPGELEFKKGDVIAVLKSVYKDWWSGSLKGKTGIFPLNYVEKLADPTPEELQREAQMEAEVFAEIKNVEKLLTLLSAGNTGPREEDNEEISKLYHQTLAIRPKLIKLIEKYSQKKDDFTQLNEKFIKARRDYEALLESSMSHPPGPTYHQYAMRPPMTNSYGSGGYGAPPPQQQQEPPRFYNPAPAQDAPQYPATSPSPNPNHFIRPAGTPAPYYMGGAEGPGQLQHQQQPPYPQQQPQPAYGAPSRPQDQQRNPSGPSPMAPAPLNTTSSPPPGNQYTPYQAPGASGANNRTNSYSSTNGGAPQELSTSAYDSPIAQHSTNPLSNPSYNAPSAPSYSQGRPGAPTDDPYGPTSPGAGSSNNVGSAPPPPSGPAPSGPAPSAPSAPSAPSAPGAPNSYTQGAYHSQNPYAAAAAAAAAAASRTHVPGVYDGAGSEVSSTAPQPPAALQPGGGAQPQYKAYVPPGAPSAPGSGQEGPSAPGQNDGLADYYRSAY.

Residues 17–146 (ATDENLTSED…RLKQSNPTLQ (130 aa)) form the VHS domain. Positions 142-237 (NPTLQPPSAP…PQPVPSSTTA (96 aa)) are disordered. In terms of domain architecture, UIM spans 163-182 (KEEEELQMALQLSLQEEERK). The segment covering 186–214 (AGASGATASSSSGGAAAGPSNAGGAVASG) has biased composition (low complexity). An SH3 domain is found at 238–297 (ATVSRVRALYDFVPSEPGELEFKKGDVIAVLKSVYKDWWSGSLKGKTGIFPLNYVEKLAD). Residues 390–745 (SSMSHPPGPT…GLADYYRSAY (356 aa)) are disordered. A compositionally biased stretch (low complexity) spans 425-446 (QQQEPPRFYNPAPAQDAPQYPA). Polar residues-rich tracts occupy residues 518-532 (LNTT…QYTP) and 540-576 (GANN…TNPL). Over residues 577 to 590 (SNPSYNAPSAPSYS) the composition is skewed to low complexity. Pro residues predominate over residues 618-635 (APPPPSGPAPSGPAPSAP). Residues 636 to 647 (SAPSAPSAPGAP) are compositionally biased toward low complexity. The span at 648–660 (NSYTQGAYHSQNP) shows a compositional bias: polar residues. 2 stretches are compositionally biased toward low complexity: residues 662–672 (AAAAAAAAAAA) and 719–733 (SAPG…APGQ).

The protein belongs to the STAM family. In terms of assembly, component of the ESCRT-0 complex composed of hse1 and vps27.

The protein localises to the endosome membrane. Functionally, component of the ESCRT-0 complex which is the sorting receptor for ubiquitinated cargo proteins at the multivesicular body (MVB). In Neurospora crassa (strain ATCC 24698 / 74-OR23-1A / CBS 708.71 / DSM 1257 / FGSC 987), this protein is Class E vacuolar protein-sorting machinery protein hse1 (hse1).